Here is a 505-residue protein sequence, read N- to C-terminus: Apolipoprotein N-acyltransferase (505 aa).

A run of 6 helical transmembrane segments spans residues 23-43 (LLAL…AVLY), 58-78 (GWWF…VSMN), 85-105 (PLLA…FFAL), 125-145 (LCFA…LTGF), 162-182 (LAPL…AALL), and 192-212 (PSFL…GLAL). Residues 230-469 (IQGNVEQDLK…QAVLYGEVVP (240 aa)) enclose the CN hydrolase domain. E269 functions as the Proton acceptor in the catalytic mechanism. K329 is an active-site residue. The active-site Nucleophile is the C381. Residues 482 to 502 (WPLAIVCALLLGWALLAGRIA) traverse the membrane as a helical segment.

This sequence belongs to the CN hydrolase family. Apolipoprotein N-acyltransferase subfamily.

The protein localises to the cell inner membrane. It carries out the reaction N-terminal S-1,2-diacyl-sn-glyceryl-L-cysteinyl-[lipoprotein] + a glycerophospholipid = N-acyl-S-1,2-diacyl-sn-glyceryl-L-cysteinyl-[lipoprotein] + a 2-acyl-sn-glycero-3-phospholipid + H(+). The protein operates within protein modification; lipoprotein biosynthesis (N-acyl transfer). Its function is as follows. Catalyzes the phospholipid dependent N-acylation of the N-terminal cysteine of apolipoprotein, the last step in lipoprotein maturation. This chain is Apolipoprotein N-acyltransferase, found in Pseudomonas putida (strain ATCC 47054 / DSM 6125 / CFBP 8728 / NCIMB 11950 / KT2440).